The following is a 159-amino-acid chain: S-ribosylhomocysteine lyase (159 aa).

Residues H53, H57, and C124 each coordinate Fe cation.

The protein belongs to the LuxS family. Homodimer. Fe cation serves as cofactor.

It catalyses the reaction S-(5-deoxy-D-ribos-5-yl)-L-homocysteine = (S)-4,5-dihydroxypentane-2,3-dione + L-homocysteine. Functionally, involved in the synthesis of autoinducer 2 (AI-2) which is secreted by bacteria and is used to communicate both the cell density and the metabolic potential of the environment. The regulation of gene expression in response to changes in cell density is called quorum sensing. Catalyzes the transformation of S-ribosylhomocysteine (RHC) to homocysteine (HC) and 4,5-dihydroxy-2,3-pentadione (DPD). The chain is S-ribosylhomocysteine lyase from Porphyromonas gingivalis (strain ATCC BAA-308 / W83).